The chain runs to 413 residues: Sprouty-related, EVH1 domain-containing protein 2 (413 aa).

The 118-residue stretch at 5 to 122 (THPNDDSYIV…RGVRKALEDL (118 aa)) folds into the WH1 domain. A disordered region spans residues 122 to 163 (LTEGSTTSSSTLQNEAELGDDDVFTTATDSSSNSSQKKDHST). The KBD domain maps to 195 to 248 (FSRNLFPFEDEEIVRINPRERWMITGYEDYRYAAVPDKFIQPEDSDSYVQISKN). Residues 303–411 (RCVYCRDMFN…CGCCGGKHKA (109 aa)) enclose the SPR domain.

The protein localises to the cell membrane. Its subcellular location is the cytoplasmic vesicle. The protein resides in the secretory vesicle membrane. It is found in the cytoplasm. Functionally, negatively regulates Ras signaling pathways and downstream activation of MAP kinases. This chain is Sprouty-related, EVH1 domain-containing protein 2 (spred2), found in Danio rerio (Zebrafish).